We begin with the raw amino-acid sequence, 61 residues long: Large ribosomal subunit protein bL32 (61 aa).

Residues 1–16 (MAVPKKKTSKSRKNMR) are compositionally biased toward basic residues. A disordered region spans residues 1–20 (MAVPKKKTSKSRKNMRRAHD).

The protein belongs to the bacterial ribosomal protein bL32 family.

The chain is Large ribosomal subunit protein bL32 from Pelobacter propionicus (strain DSM 2379 / NBRC 103807 / OttBd1).